The chain runs to 152 residues: Small ribosomal subunit protein bS6 (152 aa).

The disordered stretch occupies residues 96–152 (HEEGPSAMLQKRDRDDRGPREGGDRGPRREFGDRPPRRDGDFQRGPRPDRAPREDRA).

This sequence belongs to the bacterial ribosomal protein bS6 family.

Its function is as follows. Binds together with bS18 to 16S ribosomal RNA. In Rhizobium etli (strain CIAT 652), this protein is Small ribosomal subunit protein bS6.